A 137-amino-acid chain; its full sequence is uncharacterized protein (137 aa).

Residues 30–105 (SLLCVFTALR…IRFIQIPDKI (76 aa)) form the Sm domain.

This is an uncharacterized protein from Dictyostelium discoideum (Social amoeba).